A 118-amino-acid chain; its full sequence is Large ribosomal subunit protein bL17 (118 aa).

The protein belongs to the bacterial ribosomal protein bL17 family. In terms of assembly, part of the 50S ribosomal subunit. Contacts protein L32.

The polypeptide is Large ribosomal subunit protein bL17 (Hydrogenobaculum sp. (strain Y04AAS1)).